A 320-amino-acid chain; its full sequence is Cytochrome f (320 aa).

An N-terminal signal peptide occupies residues 1–35; sequence MQTRNAFSWLKKQITRSISVSLMIYILTRTSISSA. 4 residues coordinate heme: Tyr-36, Cys-56, Cys-59, and His-60. Residues 286 to 305 form a helical membrane-spanning segment; that stretch reads VQGLLFFLASVILAQIFLVL.

The protein belongs to the cytochrome f family. As to quaternary structure, the 4 large subunits of the cytochrome b6-f complex are cytochrome b6, subunit IV (17 kDa polypeptide, petD), cytochrome f and the Rieske protein, while the 4 small subunits are PetG, PetL, PetM and PetN. The complex functions as a dimer. It depends on heme as a cofactor.

It localises to the plastid. It is found in the chloroplast thylakoid membrane. In terms of biological role, component of the cytochrome b6-f complex, which mediates electron transfer between photosystem II (PSII) and photosystem I (PSI), cyclic electron flow around PSI, and state transitions. This is Cytochrome f from Atropa belladonna (Belladonna).